The chain runs to 370 residues: Nodulation protein Z (370 aa).

A GT23 domain is found at 47–361 (SSNDRFVVSR…NDPGRLILIE (315 aa)).

The protein belongs to the glycosyltransferase 23 family.

Fucosyltransferase which adds the fucose moiety of the nod factor on its terminal reducing N-acetylglucosamine end. Uses GDP-fucose as the donor group. In Bradyrhizobium diazoefficiens (strain JCM 10833 / BCRC 13528 / IAM 13628 / NBRC 14792 / USDA 110), this protein is Nodulation protein Z (nodZ).